Here is a 240-residue protein sequence, read N- to C-terminus: Uridylate kinase (240 aa).

12-15 (KLSG) serves as a coordination point for ATP. An involved in allosteric activation by GTP region spans residues 20–25 (GEDGFG). Gly54 contributes to the UMP binding site. ATP contacts are provided by Gly55 and Arg59. Residues Asp74 and 135-142 (TGNPYFST) contribute to the UMP site. 3 residues coordinate ATP: Asn163, Tyr169, and Asp172.

This sequence belongs to the UMP kinase family. As to quaternary structure, homohexamer.

The protein resides in the cytoplasm. It carries out the reaction UMP + ATP = UDP + ADP. It functions in the pathway pyrimidine metabolism; CTP biosynthesis via de novo pathway; UDP from UMP (UMPK route): step 1/1. Allosterically activated by GTP. Probably inhibited by UTP. Functionally, catalyzes the reversible phosphorylation of UMP to UDP. The sequence is that of Uridylate kinase (pyrH) from Enterococcus faecalis (strain ATCC 700802 / V583).